A 181-amino-acid polypeptide reads, in one-letter code: Adenylyl-sulfate kinase (181 aa).

Gly20–Ser27 provides a ligand contact to ATP. The Phosphoserine intermediate role is filled by Ser94.

This sequence belongs to the APS kinase family.

It carries out the reaction adenosine 5'-phosphosulfate + ATP = 3'-phosphoadenylyl sulfate + ADP + H(+). It participates in sulfur metabolism; hydrogen sulfide biosynthesis; sulfite from sulfate: step 2/3. Its function is as follows. Catalyzes the synthesis of activated sulfate. This is Adenylyl-sulfate kinase from Deinococcus geothermalis (strain DSM 11300 / CIP 105573 / AG-3a).